A 227-amino-acid chain; its full sequence is UPF0173 metal-dependent hydrolase DR_0006 (227 aa).

It belongs to the UPF0173 family.

This chain is UPF0173 metal-dependent hydrolase DR_0006, found in Deinococcus radiodurans (strain ATCC 13939 / DSM 20539 / JCM 16871 / CCUG 27074 / LMG 4051 / NBRC 15346 / NCIMB 9279 / VKM B-1422 / R1).